The chain runs to 363 residues: Aspartate carbamoyltransferase, chloroplastic (363 aa).

Positions 1–21 (MAAARATLPLPRVPAPSPRPQ) are disordered. The transit peptide at 1–36 (MAAARATLPLPRVPAPSPRPQLRPFPSLPARRGAVA) directs the protein to the chloroplast. The span at 11 to 21 (PRVPAPSPRPQ) shows a compositional bias: pro residues. Arginine 109 and threonine 110 together coordinate carbamoyl phosphate. Residues arginine 109 and threonine 110 each contribute to the UMP site. Lysine 139 contributes to the L-aspartate binding site. The carbamoyl phosphate site is built by arginine 160, histidine 188, and glutamine 191. Residues arginine 160 and histidine 188 each coordinate UMP. UMP contacts are provided by arginine 221 and arginine 283. Arginine 221 and arginine 283 together coordinate L-aspartate. Carbamoyl phosphate-binding residues include leucine 323 and proline 324.

Belongs to the aspartate/ornithine carbamoyltransferase superfamily. ATCase family. Homotrimer.

Its subcellular location is the plastid. The protein resides in the chloroplast. It carries out the reaction carbamoyl phosphate + L-aspartate = N-carbamoyl-L-aspartate + phosphate + H(+). It functions in the pathway pyrimidine metabolism; UMP biosynthesis via de novo pathway; (S)-dihydroorotate from bicarbonate: step 2/3. With respect to regulation, feedback inhibited by UMP. In terms of biological role, catalyzes the condensation of carbamoyl phosphate and aspartate to form carbamoyl aspartate and inorganic phosphate, the committed step in the de novo pyrimidine nucleotide biosynthesis pathway. The protein is Aspartate carbamoyltransferase, chloroplastic (PYRB) of Oryza sativa subsp. japonica (Rice).